The sequence spans 180 residues: uncharacterized protein (180 aa).

This is an uncharacterized protein from Staphylococcus aureus.